Here is a 96-residue protein sequence, read N- to C-terminus: ATP-dependent Clp protease adapter protein ClpS (96 aa).

This sequence belongs to the ClpS family. Binds to the N-terminal domain of the chaperone ClpA.

Functionally, involved in the modulation of the specificity of the ClpAP-mediated ATP-dependent protein degradation. In Campylobacter jejuni subsp. jejuni serotype O:2 (strain ATCC 700819 / NCTC 11168), this protein is ATP-dependent Clp protease adapter protein ClpS.